The chain runs to 160 residues: Cytochrome b6-f complex subunit 4 (160 aa).

Transmembrane regions (helical) follow at residues 36–56, 95–115, and 131–151; these read LLYM…GLAV, LLGV…PFIE, and TVFL…TLPI.

It belongs to the cytochrome b family. PetD subfamily. As to quaternary structure, the 4 large subunits of the cytochrome b6-f complex are cytochrome b6, subunit IV (17 kDa polypeptide, petD), cytochrome f and the Rieske protein, while the 4 small subunits are petG, petL, petM and petN. The complex functions as a dimer.

It localises to the plastid. Its subcellular location is the chloroplast thylakoid membrane. Functionally, component of the cytochrome b6-f complex, which mediates electron transfer between photosystem II (PSII) and photosystem I (PSI), cyclic electron flow around PSI, and state transitions. This Coleochaete orbicularis (Charophycean green alga) protein is Cytochrome b6-f complex subunit 4.